Reading from the N-terminus, the 308-residue chain is MQPSGHRLRDIEHHPLLTDNDNYDSASSSSSETDMADRVWFIRDGCGMVCAVMTWLLVVYADFVVTFVMLLPSKDFWYSVVNGVLFNCLAVLALSSHLRTMLTDPGAVPKGNATKEYMESLQLKPGEVIYKCPKCCCIKPERAHHCSICKRCIRKMDHHCPWVNNCVGEKNQRFFVLFTMYIALSSVHALILCGLQFISCVRGQWTECSDFSPPITVILLVFLCLEGLLFFTFTAVMFGTQIHSICNDETEIERLKSEKPTWERRLRWEGMKSVFGGPPSLLWMNPFVGFRLRRLQMRTRKGGPEFSV.

Residues 1–50 lie on the Cytoplasmic side of the membrane; that stretch reads MQPSGHRLRDIEHHPLLTDNDNYDSASSSSSETDMADRVWFIRDGCGMVC. The helical transmembrane segment at 51–71 threads the bilayer; that stretch reads AVMTWLLVVYADFVVTFVMLL. At 72–75 the chain is on the lumenal side; that stretch reads PSKD. The chain crosses the membrane as a helical span at residues 76 to 96; sequence FWYSVVNGVLFNCLAVLALSS. The Cytoplasmic portion of the chain corresponds to 97-173; the sequence is HLRTMLTDPG…NNCVGEKNQR (77 aa). Residues 130 to 180 form the DHHC domain; sequence YKCPKCCCIKPERAHHCSICKRCIRKMDHHCPWVNNCVGEKNQRFFVLFTM. The active-site S-palmitoyl cysteine intermediate is Cys-160. Residues 174 to 194 form a helical membrane-spanning segment; sequence FFVLFTMYIALSSVHALILCG. Residues 195 to 217 lie on the Lumenal side of the membrane; the sequence is LQFISCVRGQWTECSDFSPPITV. A helical membrane pass occupies residues 218 to 238; it reads ILLVFLCLEGLLFFTFTAVMF. Topologically, residues 239 to 308 are cytoplasmic; it reads GTQIHSICND…TRKGGPEFSV (70 aa).

Belongs to the DHHC palmitoyltransferase family. As to quaternary structure, homooligomers. Heterooligomers with ZDHHC3. Autopalmitoylated. Ubiquitously expressed, with highest levels in liver, kidney and brain. Expressed in all brain regions.

The protein resides in the golgi apparatus membrane. The catalysed reaction is L-cysteinyl-[protein] + hexadecanoyl-CoA = S-hexadecanoyl-L-cysteinyl-[protein] + CoA. The enzyme catalyses L-cysteinyl-[protein] + tetradecanoyl-CoA = S-tetradecanoyl-L-cysteinyl-[protein] + CoA. It carries out the reaction L-cysteinyl-[protein] + octadecanoyl-CoA = S-octadecanoyl-L-cysteinyl-[protein] + CoA. In terms of biological role, golgi-localized palmitoyltransferase that catalyzes the addition of palmitate onto various protein substrates and therefore functions in several unrelated biological processes. Has no stringent fatty acid selectivity and in addition to palmitate can also transfer onto target proteins myristate from tetradecanoyl-CoA and stearate from octadecanoyl-CoA. Palmitoylates sex steroid hormone receptors, including ESR1, PGR and AR, thereby regulating their targeting to the plasma membrane and their function in rapid intracellular signaling upon binding of sex hormones. Palmitoylates GNAQ, a heterotrimeric G protein, regulating its dynamic localization at the plasma membrane and is thereby involved in GNAQ-dependent G protein-coupled receptor signaling pathways. Also functions in ligand-induced cell death by regulating the FAS signaling pathway through the palmitoylation and stabilization of the receptor at the plasma membrane. In epithelial cells, palmitoylates SCRIB and regulates its localization to the plasma membrane, regulating indirectly cell polarity and differentiation. Also palmitoylates JAM3 and promotes its expression at tight junctions and regulates its function in cell migration. Palmitoylates the glucose transporter GLUT4/SLC2A4 and controls the insulin-dependent translocation of GLUT4 to the plasma membrane. In brain, could also palmitoylate SNAP25 and DLG4/PSD95. Could also palmitoylate DNAJC5 and regulate its localization to the Golgi membrane. Could also palmitoylate NCDN. May play a role in follicle stimulation hormone (FSH) activation of testicular Sertoli cells. Activates pyroptosis by catalyzing palmitoylation of gasdermin-D (GSDMD). In Mus musculus (Mouse), this protein is Palmitoyltransferase ZDHHC7.